A 476-amino-acid polypeptide reads, in one-letter code: Aspartyl/glutamyl-tRNA(Asn/Gln) amidotransferase subunit B (476 aa).

This sequence belongs to the GatB/GatE family. GatB subfamily. In terms of assembly, heterotrimer of A, B and C subunits.

It carries out the reaction L-glutamyl-tRNA(Gln) + L-glutamine + ATP + H2O = L-glutaminyl-tRNA(Gln) + L-glutamate + ADP + phosphate + H(+). It catalyses the reaction L-aspartyl-tRNA(Asn) + L-glutamine + ATP + H2O = L-asparaginyl-tRNA(Asn) + L-glutamate + ADP + phosphate + 2 H(+). Functionally, allows the formation of correctly charged Asn-tRNA(Asn) or Gln-tRNA(Gln) through the transamidation of misacylated Asp-tRNA(Asn) or Glu-tRNA(Gln) in organisms which lack either or both of asparaginyl-tRNA or glutaminyl-tRNA synthetases. The reaction takes place in the presence of glutamine and ATP through an activated phospho-Asp-tRNA(Asn) or phospho-Glu-tRNA(Gln). The sequence is that of Aspartyl/glutamyl-tRNA(Asn/Gln) amidotransferase subunit B from Lactobacillus acidophilus (strain ATCC 700396 / NCK56 / N2 / NCFM).